Consider the following 285-residue polypeptide: Protoheme IX farnesyltransferase (285 aa).

9 helical membrane-spanning segments follow: residues 13 to 33 (LGKLGVVSLLDLAAVAGAFLA), 40 to 60 (LLPIIPMFIGGTLASMGAMII), 89 to 109 (EAIIVGSLLAILGTALGFIDN), 110 to 130 (ILTAFFIALGVVIYIFVYTIL), 137 to 157 (LNIVIGGFAGSAAAWAGYTSL), 165 to 185 (GFLLGFLIFMWTPGHFWSLAL), 194 to 214 (AHYPMLPAVVGITTSARAIAI), 218 to 238 (LMIPIVLLLGYYINLIALIAF), and 265 to 285 (FIFSNIYLMLILLIMIIVKLI).

This sequence belongs to the UbiA prenyltransferase family. Protoheme IX farnesyltransferase subfamily.

It localises to the cell membrane. It catalyses the reaction heme b + (2E,6E)-farnesyl diphosphate + H2O = Fe(II)-heme o + diphosphate. Its pathway is porphyrin-containing compound metabolism; heme O biosynthesis; heme O from protoheme: step 1/1. Functionally, converts heme B (protoheme IX) to heme O by substitution of the vinyl group on carbon 2 of heme B porphyrin ring with a hydroxyethyl farnesyl side group. In Saccharolobus islandicus (strain Y.G.57.14 / Yellowstone #1) (Sulfolobus islandicus), this protein is Protoheme IX farnesyltransferase.